We begin with the raw amino-acid sequence, 1061 residues long: Eukaryotic translation initiation factor 3 subunit A (1061 aa).

Over residues 114-126 the composition is skewed to polar residues; it reads QSSIEATTGSSSV. The disordered stretch occupies residues 114 to 133; that stretch reads QSSIEATTGSSSVEDLEASE. Residues 339 to 523 form the PCI domain; the sequence is LQKAATFVVL…GVLSFDVDVF (185 aa). 2 coiled-coil regions span residues 609–724 and 789–906; these read EVIQ…KRLD and RADL…AAAA. Positions 828–901 are enriched in basic and acidic residues; that stretch reads REKREREEKE…EAMARRRAEK (74 aa). Positions 828-1061 are disordered; sequence REKREREEKE…KYVPKFRREG (234 aa). Composition is skewed to pro residues over residues 950 to 962 and 1000 to 1011; these read SGPP…PPPI and APPPERSGPPPR.

Belongs to the eIF-3 subunit A family. As to quaternary structure, component of the eukaryotic translation initiation factor 3 (eIF-3) complex.

The protein resides in the cytoplasm. Its function is as follows. RNA-binding component of the eukaryotic translation initiation factor 3 (eIF-3) complex, which is involved in protein synthesis of a specialized repertoire of mRNAs and, together with other initiation factors, stimulates binding of mRNA and methionyl-tRNAi to the 40S ribosome. The eIF-3 complex specifically targets and initiates translation of a subset of mRNAs involved in cell proliferation. The sequence is that of Eukaryotic translation initiation factor 3 subunit A from Chaetomium globosum (strain ATCC 6205 / CBS 148.51 / DSM 1962 / NBRC 6347 / NRRL 1970) (Soil fungus).